Here is a 316-residue protein sequence, read N- to C-terminus: Protein YIPF2 (316 aa).

Alanine 2 bears the N-acetylalanine mark. Over 2-124 (ASADELTFHE…LRNRPDLYGP (123 aa)) the chain is Cytoplasmic. The interval 16–37 (TNLLADTPDAATTSRSDQLTPQ) is disordered. A compositionally biased stretch (polar residues) spans 25–36 (AATTSRSDQLTP). The chain crosses the membrane as a helical span at residues 125–145 (FWICATLAFVLAVTGNLTLVL). Residues 146–163 (AQRRDPSIHYSPQFHKVT) are Lumenal-facing. Residues 164–184 (VAGISIYCYAWLVPLALWGFL) form a helical membrane-spanning segment. Over 185–196 (RWRKGVQERMGP) the chain is Cytoplasmic. A helical membrane pass occupies residues 197 to 219 (YTFLETVCIYGYSLFVFIPMVVL). The Lumenal segment spans residues 220-231 (WLIPVPWLQWLF). Residues 232–252 (GALALGLSAAGLVFTLWPVVR) traverse the membrane as a helical segment. The Cytoplasmic segment spans residues 253–256 (EDTR). The chain crosses the membrane as a helical span at residues 257-277 (LVATVLLSVVVLLHALLAMGC). The Lumenal segment spans residues 278-316 (KLYFFQSLPPENVAPPPQITSLPSNIALSPTLPQSLAPS).

The protein belongs to the YIP1 family. Interacts with YIPF6; this interaction may stabilize YIPF2. May also form a ternary complex with YIPF1 and YIPF6.

It is found in the golgi apparatus. The protein resides in the cis-Golgi network membrane. It localises to the trans-Golgi network membrane. The protein localises to the late endosome membrane. This is Protein YIPF2 (YIPF2) from Homo sapiens (Human).